Here is a 276-residue protein sequence, read N- to C-terminus: MVKVAAFVCGVASSGKSTFCGALMSYMKSVGRSCHLVNLDPAAENFEWEPTVDIRDLISIDDVMEELDYGPNGGLIYCFEFLMENLDWLNEEIGDYDEDYLIFDMPGQIELYTHVPILPALIRHLQVTLNFRPCAVYLLESQFLVDRTKFFAGVLSAMSAMVMMEVPHINLLSKMDLLKDNNNITKAELKRFLNTDPLLLTGEINETTNPKFHELNRCIVQLIDDFNMVNFLPLESGNEESVSRVLSYIDDATQWYEDQEPKDPDRFEADDLEDDE.

Residue 13 to 18 (SSGKST) participates in GTP binding. A Gly-Pro-Asn (GPN)-loop; involved in dimer interface motif is present at residues 70 to 72 (GPN). 173–176 (SKMD) is a binding site for GTP. The segment at 257-276 (EDQEPKDPDRFEADDLEDDE) is disordered. The segment covering 259–269 (QEPKDPDRFEA) has biased composition (basic and acidic residues).

The protein belongs to the GPN-loop GTPase family. In terms of assembly, heterodimers with gpn1 or gpn2. Binds to RNA polymerase II (RNAPII).

The protein localises to the cytoplasm. Its subcellular location is the nucleus. In terms of biological role, small GTPase required for proper nuclear import of RNA polymerase II and III (RNAPII and RNAPIII). May act at an RNAP assembly step prior to nuclear import. This Schizosaccharomyces pombe (strain 972 / ATCC 24843) (Fission yeast) protein is GPN-loop GTPase 3.